Consider the following 503-residue polypeptide: Maturase K (503 aa).

Belongs to the intron maturase 2 family. MatK subfamily.

Its subcellular location is the plastid. The protein resides in the chloroplast. Functionally, usually encoded in the trnK tRNA gene intron. Probably assists in splicing its own and other chloroplast group II introns. In Rosa acicularis (Prickly rose), this protein is Maturase K.